Reading from the N-terminus, the 357-residue chain is Putative ankyrin repeat protein L42 (357 aa).

9 ANK repeats span residues 34 to 63 (SCKQFIGLVCILTNNLNLLNLLVKKGNLKF), 86 to 115 (EQNECLKMSCIHGCLEILKYLISIGVDFRM), 116 to 145 (NDDEPLMLAIENGHLKIVQFLYSKRVNIRA), 147 to 175 (NNRPLVLSCEKGYINIVNFLLDKKASFVS), 176 to 205 (KQNEVFSTACGFGQMDIVKLLVEKGADINV), 206 to 235 (GKIPPIRAAAAGGHLNVIEHLVNKGASINK), 237 to 265 (SVDSLFSAAFYGHLNIVKYLLGYISEVNI), 267 to 294 (YYAFEKACINGHIDIVQYLFSENIITKD), and 301 to 331 (NTRYLFYHTIRNKHKHIIKFLIENNIFDKDK).

The protein is Putative ankyrin repeat protein L42 of Acanthamoeba polyphaga (Amoeba).